Reading from the N-terminus, the 156-residue chain is Small ribosomal subunit protein uS7 (156 aa).

This sequence belongs to the universal ribosomal protein uS7 family. As to quaternary structure, part of the 30S ribosomal subunit. Contacts proteins S9 and S11.

Its function is as follows. One of the primary rRNA binding proteins, it binds directly to 16S rRNA where it nucleates assembly of the head domain of the 30S subunit. Is located at the subunit interface close to the decoding center, probably blocks exit of the E-site tRNA. The protein is Small ribosomal subunit protein uS7 of Mycoplasma mobile (strain ATCC 43663 / 163K / NCTC 11711) (Mesomycoplasma mobile).